The chain runs to 914 residues: Origin recognition complex subunit 1 (914 aa).

In terms of domain architecture, BAH spans 48–188 (IKLGRGDSVV…PTGEKFVDIN (141 aa)). A disordered region spans residues 218–343 (KEIKRGPQKK…PKDPSKPRQM (126 aa)). Positions 221 to 230 (KRGPQKKDKA) are enriched in basic and acidic residues. The residue at position 237 (serine 237) is a Phosphoserine. Positions 247 to 296 (TDNEDGNEDESSDYESPSDIDVSEDMDSGEISADELEEEEDEEEDEDEEE) are enriched in acidic residues. Over residues 303 to 313 (NSPRKRGRKIK) the composition is skewed to basic residues. Residues valine 435 and 479–487 (GTPGVGKTL) each bind ATP. Aspartate 566 and glutamate 567 together coordinate Mg(2+). ATP-binding positions include glutamate 567, asparagine 600, arginine 704, and 726-733 (GYGYDGKT).

Belongs to the ORC1 family. As to quaternary structure, component of the origin recognition complex (ORC) composed of at least ORC1, ORC2, ORC3, ORC4, ORC5 and ORC6. Interacts with MCM10 and TAH11.

The protein localises to the nucleus. Component of the origin recognition complex (ORC) that binds origins of replication. It has a role in both chromosomal replication and mating type transcriptional silencing. Binds to the ARS consensus sequence (ACS) of origins of replication. The chain is Origin recognition complex subunit 1 (ORC1) from Saccharomyces cerevisiae (strain ATCC 204508 / S288c) (Baker's yeast).